The sequence spans 363 residues: Small ribosomal subunit biogenesis GTPase RsgA (363 aa).

In terms of domain architecture, CP-type G spans 112 to 268; sequence HQQVIAANID…LIDTPGMREL (157 aa). Residues 157–160 and 210–218 each bind GTP; these read TKAD and GSSGAGKST. Cys291, Cys296, His298, and Cys304 together coordinate Zn(2+). The segment at 340 to 363 is disordered; the sequence is RVAQNNRGKGSGKRPASIDRPGRR.

This sequence belongs to the TRAFAC class YlqF/YawG GTPase family. RsgA subfamily. As to quaternary structure, monomer. Associates with 30S ribosomal subunit, binds 16S rRNA. It depends on Zn(2+) as a cofactor.

It localises to the cytoplasm. One of several proteins that assist in the late maturation steps of the functional core of the 30S ribosomal subunit. Helps release RbfA from mature subunits. May play a role in the assembly of ribosomal proteins into the subunit. Circularly permuted GTPase that catalyzes slow GTP hydrolysis, GTPase activity is stimulated by the 30S ribosomal subunit. This Xanthomonas oryzae pv. oryzae (strain PXO99A) protein is Small ribosomal subunit biogenesis GTPase RsgA.